The primary structure comprises 997 residues: uncharacterized protein (997 aa).

It belongs to the MG414/MG415 family.

This is an uncharacterized protein from Mycoplasma pneumoniae (strain ATCC 29342 / M129 / Subtype 1) (Mycoplasmoides pneumoniae).